The following is a 598-amino-acid chain: Aspartate--tRNA(Asp/Asn) ligase (598 aa).

Position 174 (E174) interacts with L-aspartate. The aspartate stretch occupies residues 198-201; the sequence is QQLK. R220 provides a ligand contact to L-aspartate. Residues 220-222 and Q229 each bind ATP; that span reads RDE. Position 458 (H458) interacts with L-aspartate. E492 provides a ligand contact to ATP. An L-aspartate-binding site is contributed by R499. Residue 544 to 547 coordinates ATP; that stretch reads GIDR.

It belongs to the class-II aminoacyl-tRNA synthetase family. Type 1 subfamily. In terms of assembly, homodimer.

The protein resides in the cytoplasm. It catalyses the reaction tRNA(Asx) + L-aspartate + ATP = L-aspartyl-tRNA(Asx) + AMP + diphosphate. Functionally, aspartyl-tRNA synthetase with relaxed tRNA specificity since it is able to aspartylate not only its cognate tRNA(Asp) but also tRNA(Asn). Reaction proceeds in two steps: L-aspartate is first activated by ATP to form Asp-AMP and then transferred to the acceptor end of tRNA(Asp/Asn). The polypeptide is Aspartate--tRNA(Asp/Asn) ligase (Dehalococcoides mccartyi (strain CBDB1)).